The primary structure comprises 124 residues: Small ribosomal subunit protein uS12 (124 aa).

3-methylthioaspartic acid is present on Asp89.

It belongs to the universal ribosomal protein uS12 family. As to quaternary structure, part of the 30S ribosomal subunit. Contacts proteins S8 and S17. May interact with IF1 in the 30S initiation complex.

In terms of biological role, with S4 and S5 plays an important role in translational accuracy. Its function is as follows. Interacts with and stabilizes bases of the 16S rRNA that are involved in tRNA selection in the A site and with the mRNA backbone. Located at the interface of the 30S and 50S subunits, it traverses the body of the 30S subunit contacting proteins on the other side and probably holding the rRNA structure together. The combined cluster of proteins S8, S12 and S17 appears to hold together the shoulder and platform of the 30S subunit. In Yersinia enterocolitica serotype O:8 / biotype 1B (strain NCTC 13174 / 8081), this protein is Small ribosomal subunit protein uS12.